We begin with the raw amino-acid sequence, 973 residues long: Isoleucine--tRNA ligase, mitochondrial (973 aa).

The 'HIGH' region motif lies at 87–97; the sequence is PFANGRLHIGH. The short motif at 625–629 is the 'KMSKS' region element; that stretch reads KQSKS. Position 628 (K628) interacts with ATP.

Belongs to the class-I aminoacyl-tRNA synthetase family.

The protein resides in the cytoplasm. It localises to the mitochondrion matrix. The catalysed reaction is tRNA(Ile) + L-isoleucine + ATP = L-isoleucyl-tRNA(Ile) + AMP + diphosphate. The protein is Isoleucine--tRNA ligase, mitochondrial (ism1) of Schizosaccharomyces pombe (strain 972 / ATCC 24843) (Fission yeast).